We begin with the raw amino-acid sequence, 260 residues long: Acyl-coenzyme A diphosphatase FITM2 (260 aa).

Over 1–23 the chain is Cytoplasmic; sequence MERLENCAQMFQRKFLNEAFRRH. The chain crosses the membrane as a helical span at residues 24–44; the sequence is CPVLLACIALGGSLLKELSPL. At 45–57 the chain is on the lumenal side; it reads PDSYWNNKRNVLN. A helical transmembrane segment spans residues 58 to 78; the sequence is VYFVKFCWGWTLWLLLPFITL. Topologically, residues 79–93 are cytoplasmic; that stretch reads TNYKLTGSITKVLRR. The chain crosses the membrane as a helical span at residues 94 to 114; it reads LSSLLVGTLFWYLCTNLFLYI. The Lumenal segment spans residues 115–144; sequence EHITGSCYESEALLDSIEHQDRKECRLHGG. The chain crosses the membrane as a helical span at residues 145-165; that stretch reads FWHGFDISGHCFLLSYCILII. The active site involves His-154. The Cytoplasmic portion of the chain corresponds to 166 to 189; it reads LEETSVIRSIQFERHWHRMAINAQ. 2 consecutive transmembrane segments (helical) span residues 190–210 and 211–231; these read FTALSILVIIWVWMFLCTAVY and FHNIFQKVIGTAFGMLAWYIT. Residue His-212 is part of the active site. The Cytoplasmic portion of the chain corresponds to 232 to 260; it reads YRWWYLQPISPGLPPASASHSEKEPVYKN.

It belongs to the FIT family. FIT2 subfamily.

The protein resides in the endoplasmic reticulum membrane. It carries out the reaction an acyl-CoA + H2O = an acyl-4'-phosphopantetheine + adenosine 3',5'-bisphosphate + 2 H(+). Fatty acyl-coenzyme A (CoA) diphosphatase that hydrolyzes fatty acyl-CoA to yield acyl-4'-phosphopantetheine and adenosine 3',5'-bisphosphate. Preferentially hydrolyzes unsaturated long-chain acyl-CoA substrates in the endoplasmic reticulum (ER) lumen. This catalytic activity is required for maintaining ER structure and for lipid droplets (LDs) biogenesis, which are lipid storage organelles involved in maintaining lipid and energy homeostasis. May directly bind to diacylglycerol (DAGs) and triacylglycerol, which is also important for LD biogenesis. May support directional budding of nacent LDs from the ER into the cytosol by reducing DAG levels at sites of LD formation. May play a role in the regulation of cell morphology, ER morphology and cytoskeletal organization. In Xenopus laevis (African clawed frog), this protein is Acyl-coenzyme A diphosphatase FITM2.